Consider the following 327-residue polypeptide: Tetraacyldisaccharide 4'-kinase (327 aa).

52–59 (TLGGAGKT) contributes to the ATP binding site.

This sequence belongs to the LpxK family.

It catalyses the reaction a lipid A disaccharide + ATP = a lipid IVA + ADP + H(+). It functions in the pathway glycolipid biosynthesis; lipid IV(A) biosynthesis; lipid IV(A) from (3R)-3-hydroxytetradecanoyl-[acyl-carrier-protein] and UDP-N-acetyl-alpha-D-glucosamine: step 6/6. Transfers the gamma-phosphate of ATP to the 4'-position of a tetraacyldisaccharide 1-phosphate intermediate (termed DS-1-P) to form tetraacyldisaccharide 1,4'-bis-phosphate (lipid IVA). In Methylorubrum populi (strain ATCC BAA-705 / NCIMB 13946 / BJ001) (Methylobacterium populi), this protein is Tetraacyldisaccharide 4'-kinase.